Reading from the N-terminus, the 451-residue chain is Tubulin alpha-1 chain (451 aa).

Q11 is a binding site for GTP. K40 carries the post-translational modification N6-acetyllysine. E71, G144, T145, T179, N206, and N228 together coordinate GTP. Residue E71 participates in Mg(2+) binding. E254 is a catalytic residue.

This sequence belongs to the tubulin family. As to quaternary structure, dimer of alpha and beta chains. A typical microtubule is a hollow water-filled tube with an outer diameter of 25 nm and an inner diameter of 15 nM. Alpha-beta heterodimers associate head-to-tail to form protofilaments running lengthwise along the microtubule wall with the beta-tubulin subunit facing the microtubule plus end conferring a structural polarity. Microtubules usually have 13 protofilaments but different protofilament numbers can be found in some organisms and specialized cells. Mg(2+) is required as a cofactor. Undergoes a tyrosination/detyrosination cycle, the cyclic removal and re-addition of a C-terminal tyrosine residue by the enzymes tubulin tyrosine carboxypeptidase (TTCP) and tubulin tyrosine ligase (TTL), respectively. Post-translationally, acetylation of alpha chains at Lys-40 stabilizes microtubules and affects affinity and processivity of microtubule motors. This modification has a role in multiple cellular functions, ranging from cell motility, cell cycle progression or cell differentiation to intracellular trafficking and signaling.

Its subcellular location is the cytoplasm. It is found in the cytoskeleton. The catalysed reaction is GTP + H2O = GDP + phosphate + H(+). Its function is as follows. Tubulin is the major constituent of microtubules, a cylinder consisting of laterally associated linear protofilaments composed of alpha- and beta-tubulin heterodimers. Microtubules grow by the addition of GTP-tubulin dimers to the microtubule end, where a stabilizing cap forms. Below the cap, tubulin dimers are in GDP-bound state, owing to GTPase activity of alpha-tubulin. This is Tubulin alpha-1 chain (TUBA1) from Eleusine indica (Goosegrass).